A 450-amino-acid chain; its full sequence is Protein indeterminate-domain 13 (450 aa).

Ser-54 is subject to Phosphoserine. 2 C2H2-type zinc fingers span residues Phe-64–His-86 and Tyr-106–His-136. The short motif at Ile-128 to Lys-135 is the Nuclear localization signal element. The C2H2-type 2; degenerate zinc-finger motif lies at Trp-141–Ser-165. Zn(2+)-binding residues include Cys-143, Cys-146, His-159, Cys-163, Cys-170, Cys-172, His-185, and Cys-189. The segment at Phe-168–Val-191 adopts a CCHC-type 2; atypical zinc-finger fold. Residues Arg-178 to Asp-190 are SHR-binding. The segment covering Phe-248–Asn-263 has biased composition (polar residues). The disordered stretch occupies residues Phe-248–Val-280.

The protein resides in the nucleus. Probable transcription factor. The sequence is that of Protein indeterminate-domain 13 from Arabidopsis thaliana (Mouse-ear cress).